Here is a 772-residue protein sequence, read N- to C-terminus: Alpha-xylosidase (772 aa).

D416 (nucleophile) is an active-site residue. Residue E419 is part of the active site. D482 serves as the catalytic Proton donor.

Belongs to the glycosyl hydrolase 31 family. Homohexamer.

It carries out the reaction Hydrolysis of terminal, non-reducing alpha-D-xylose residues with release of alpha-D-xylose.. Functionally, can catalyze the transfer of alpha-xylosyl residue from alpha-xyloside to xylose, glucose, mannose, fructose, maltose, isomaltose, nigerose, kojibiose, sucrose and trehalose. The sequence is that of Alpha-xylosidase (yicI) from Escherichia coli (strain K12).